We begin with the raw amino-acid sequence, 590 residues long: Plasmepsin V (590 aa).

Over 1-544 (MNNYFLRKEN…EKENIFLKVS (544 aa)) the chain is Lumenal. A coiled-coil region spans residues 33 to 81 (CNNVENKIDNVGKKIENVGKKIGDMENKNDNVENKNDNVGNKNDNVKNA). Positions 100–514 (YFLDIDIGKP…DLQQNQIAFI (415 aa)) constitute a Peptidase A1 domain. Residue Asp118 is part of the active site. Intrachain disulfides connect Cys128–Cys211, Cys131–Cys134, Cys155–Cys166, Cys160–Cys171, Cys259–Cys518, Cys389–Cys434, and Cys443–Cys479. The span at 282–291 (KEKQKMDKSD) shows a compositional bias: basic and acidic residues. Residues 282 to 316 (KEKQKMDKSDNNSSNKGNVSIKLKNNDKNDDEENN) form a disordered region. A compositionally biased stretch (low complexity) spans 292 to 304 (NNSSNKGNVSIKL). Asp365 is an active-site residue. Residues 545–565 (YINLYCLWLLLALTILLSLIL) form a helical membrane-spanning segment. The Cytoplasmic segment spans residues 566–590 (YVRKMFYMDYFPLSDQNKSPIQEST).

Belongs to the peptidase A1 family. Component of a complex composed of SPC25 and PMV; the interaction is mediated via the transmembrane domains. The complex interacts with the SEC61 channel-forming translocon complex and is involved in the recognition and import of PEXEL motif-containing proteins into the ER for subsequent export. In terms of processing, it is not clear if the zymogen has a cleavable propeptide. In vitro, appears to be cleaved between Asn-80 and Ala-81. Cleavage of the putative propeptide is dispensable for catalytic activity.

It is found in the endoplasmic reticulum membrane. With respect to regulation, inhibited by peptidomimetic inhibitor WEHI-842. Inhibited by Cu(2+) and Hg(2+). In terms of biological role, during the asexual blood stage, plays an essential role in the export of several proteins into the host erythrocytes by cleaving the pentameric localization motif RxLxE/Q/D (termed Plasmodium export element (PEXEL)) located downstream of the N-terminal secretory signal sequence. Specifically, cleaves after the leucine residue in the RxLxE/Q/D (or RxLxxE) motif of exported proteins including RESA, EMP2, EMP3, KAHRP, RIF/Rifin and STEVOR. Also, by regulating protein export, plays an essential role in gametocyte development and thus, parasite transmission to the mosquito vector. This Plasmodium falciparum (isolate 3D7) protein is Plasmepsin V.